Consider the following 137-residue polypeptide: Methylmalonyl-CoA decarboxylase subunit delta (137 aa).

A helical membrane pass occupies residues 30-50 (VTVVLGMGITVVALIFLMYII).

It belongs to the OadG family. As to quaternary structure, the methylmalonyl-CoA decarboxylase is composed of four subunits: the carboxyltransferase alpha subunit (MmdA), the tunnel beta subunit (MmdB), the biotin-containing gamma subunit (MmdC) and the delta subunit (MmdD).

Its subcellular location is the cell membrane. It carries out the reaction (S)-methylmalonyl-CoA + Na(+)(in) + H(+)(out) = propanoyl-CoA + Na(+)(out) + CO2. In terms of biological role, subunit of the sodium ion pump methylmalonyl-CoA decarboxylase, which converts the chemical energy of a decarboxylation reaction into an electrochemical gradient of Na(+) ions across the cytoplasmic membrane, thereby creating a sodium ion motive force that is used for ATP synthesis. The delta subunit is required for catalytic activity as well as for the proper assembly of the individual subunits to an enzyme complex. This chain is Methylmalonyl-CoA decarboxylase subunit delta, found in Propionigenium modestum.